The primary structure comprises 750 residues: MTIRSPEPEVKIVVEKDPVKTSFEKWAKPGHFSRTLAKGPSTTTWIWNLHADAHDFDSHTNDLEEISRKVFSAHFGQLAIIFIWLSGMYFHGARFSNYEAWLSDPTHIKPSAQVVWPIVGQEILNGDVGGGFQGIQITSGFFQLWRASGITSELQLYSTAIGGLVFAALMLFAGWFHYHKAAPKLAWFQDVESMLNHHLAGLLGLGSLSWAGHQVHVSLPINQLLDAGVDPKEIPLPHEFILNRDLLAELYPSFAKGLTPFFTLNWSEYSDFLTFRGGLNPVTGGLWLTDTAHHHLAIAVLFLVAGHMYRTNWGIGHSFKEILEAHKGPFTGEGHKGLYEILTTSWHAQLALNLAMLGSLTIIVAHHMYAMPPYPYLATDYGTQLSLFTHHMWIGGFLIVGAAAHAAIFMVRDYDPTTQYNNLLDRVLRHRDAIISHLNWVCIFLGFHSFGLYIHNDTMSALGRPQDMFSDTAIQLQPVFAQWIQNTHALAPNFTAPNALASTSLTWGGGDVIAVGSKVALLPIPLGTADFLVHHIHAFTIHVTVLILLKGVLFARSSRLIPDKANLGFRFPCDGPGRGGTCQVSAWDHVFLGLFWMYNSISVVIFHFSWKMQSDVWGTISEQGVVTHITGGNFAQSAITINGWLRDFLWAQASQVIQSYGSSLSAYGLLFLGAHFVWAFSLMFLFSGRGYWQELIESIVWAHNKLKVAPAIQPRALSITQGRAVGVAHYLLGGIATTWAFFLARIIAVG.

The next 8 helical transmembrane spans lie at 70-93, 156-179, 195-219, 291-309, 346-369, 385-411, 433-455, and 531-549; these read VFSA…FHGA, LYST…FHYH, LNHH…HVSL, TAHH…GHMY, WHAQ…HHMY, LSLF…IFMV, AIIS…LYIH, and FLVH…LILL. Residues cysteine 573 and cysteine 582 each coordinate [4Fe-4S] cluster. A run of 2 helical transmembrane segments spans residues 589–610 and 664–686; these read HVFL…HFSW and LSAY…MFLF. Histidine 675 serves as a coordination point for chlorophyll a'. 2 residues coordinate chlorophyll a: methionine 683 and tyrosine 691. Tryptophan 692 is a phylloquinone binding site. A helical transmembrane segment spans residues 724 to 744; that stretch reads AVGVAHYLLGGIATTWAFFLA.

It belongs to the PsaA/PsaB family. As to quaternary structure, the PsaA/B heterodimer binds the P700 chlorophyll special pair and subsequent electron acceptors. PSI consists of a core antenna complex that captures photons, and an electron transfer chain that converts photonic excitation into a charge separation. The eukaryotic PSI reaction center is composed of at least 11 subunits. The cofactor is P700 is a chlorophyll a/chlorophyll a' dimer, A0 is one or more chlorophyll a, A1 is one or both phylloquinones and FX is a shared 4Fe-4S iron-sulfur center..

It localises to the plastid. The protein resides in the chloroplast thylakoid membrane. It catalyses the reaction reduced [plastocyanin] + hnu + oxidized [2Fe-2S]-[ferredoxin] = oxidized [plastocyanin] + reduced [2Fe-2S]-[ferredoxin]. Its function is as follows. PsaA and PsaB bind P700, the primary electron donor of photosystem I (PSI), as well as the electron acceptors A0, A1 and FX. PSI is a plastocyanin-ferredoxin oxidoreductase, converting photonic excitation into a charge separation, which transfers an electron from the donor P700 chlorophyll pair to the spectroscopically characterized acceptors A0, A1, FX, FA and FB in turn. Oxidized P700 is reduced on the lumenal side of the thylakoid membrane by plastocyanin. This is Photosystem I P700 chlorophyll a apoprotein A1 from Marchantia polymorpha (Common liverwort).